Here is a 512-residue protein sequence, read N- to C-terminus: ATP synthase subunit alpha, chloroplastic (512 aa).

Residue 170-177 coordinates ATP; that stretch reads GDRQTGKT.

It belongs to the ATPase alpha/beta chains family. In terms of assembly, F-type ATPases have 2 components, CF(1) - the catalytic core - and CF(0) - the membrane proton channel. CF(1) has five subunits: alpha(3), beta(3), gamma(1), delta(1), epsilon(1). CF(0) has four main subunits: a, b, b' and c.

It localises to the plastid. The protein resides in the chloroplast thylakoid membrane. The catalysed reaction is ATP + H2O + 4 H(+)(in) = ADP + phosphate + 5 H(+)(out). Functionally, produces ATP from ADP in the presence of a proton gradient across the membrane. The alpha chain is a regulatory subunit. The sequence is that of ATP synthase subunit alpha, chloroplastic from Chaetosphaeridium globosum (Charophycean green alga).